We begin with the raw amino-acid sequence, 279 residues long: Large ribosomal subunit protein uL2 (279 aa).

Disordered stretches follow at residues 34-55 (LAPL…RHKG) and 221-279 (RGMA…RKAK). The segment covering 40–55 (SGGRNRAGRITSRHKG) has biased composition (basic residues). Residues 232–242 (MGGGEGRSKSG) show a composition bias toward gly residues. Over residues 259-279 (LKTRNKKKASSKLIVRGRKAK) the composition is skewed to basic residues.

The protein belongs to the universal ribosomal protein uL2 family. In terms of assembly, part of the 50S ribosomal subunit. Forms a bridge to the 30S subunit in the 70S ribosome.

Its function is as follows. One of the primary rRNA binding proteins. Required for association of the 30S and 50S subunits to form the 70S ribosome, for tRNA binding and peptide bond formation. It has been suggested to have peptidyltransferase activity; this is somewhat controversial. Makes several contacts with the 16S rRNA in the 70S ribosome. This is Large ribosomal subunit protein uL2 from Chlorobium phaeobacteroides (strain BS1).